Reading from the N-terminus, the 1102-residue chain is Phosphatidylinositol 4,5-bisphosphate 3-kinase catalytic subunit gamma isoform (1102 aa).

Positions 34 to 141 (SMELIPIEFV…PGQIHLVQRH (108 aa)) constitute a PI3K-ABD domain. The PI3K-RBD domain maps to 217 to 309 (NNCIFIVIHR…GEEIHVVLDT (93 aa)). Residues 357-521 (CDRKFRVKIR…NSMSISILLD (165 aa)) form the C2 PI3K-type domain. Residues 541–723 (DRVRAEMPNQ…AVILEAYLRG (183 aa)) form the PIK helical domain. Residues 797 to 1080 (AIEKCKVMAS…QIEVCRDKGW (284 aa)) form the PI3K/PI4K catalytic domain. A G-loop region spans residues 803-809 (VMASKKK). Residues 829-838 (GIIFKHGDDL) and 864-872 (LLPYGCIST) each bind ATP. The segment at 943 to 951 (GIGDRHNDN) is catalytic loop. 961–969 (FHIDFGHIL) provides a ligand contact to ATP. The segment at 962–988 (HIDFGHILGNYKSFLGINKERVPFVLT) is activation loop. T1024 bears the Phosphothreonine; by PKA mark. S1101 is subject to Phosphoserine; by autocatalysis.

It belongs to the PI3/PI4-kinase family. As to quaternary structure, heterodimer of a catalytic subunit PIK3CG and a PIK3R5 or PIK3R6 regulatory subunit. Interacts with GRK2 through the PIK helical domain. Interaction with GRK2 is required for targeting to agonist-occupied receptor. Interacts with PDE3B; regulates PDE3B activity and thereby cAMP levels in cells. Interacts with TPM2. Interacts with EPHA8; regulates integrin-mediated cell adhesion to substrate. Interacts with HRAS; the interaction is required for membrane recruitment and beta-gamma G protein dimer-dependent activation of the PI3K gamma complex PIK3CG:PIK3R6. Post-translationally, autophosphorylation at Ser-1101 has no effect on the phosphatidylinositol-4,5-bisphosphate 3-kinase activity. In terms of tissue distribution, pancreas, skeletal muscle, liver and heart.

The protein resides in the cytoplasm. The protein localises to the cell membrane. The enzyme catalyses a 1,2-diacyl-sn-glycero-3-phospho-(1D-myo-inositol) + ATP = a 1,2-diacyl-sn-glycero-3-phospho-(1D-myo-inositol-3-phosphate) + ADP + H(+). It carries out the reaction a 1,2-diacyl-sn-glycero-3-phospho-(1D-myo-inositol-4,5-bisphosphate) + ATP = a 1,2-diacyl-sn-glycero-3-phospho-(1D-myo-inositol-3,4,5-trisphosphate) + ADP + H(+). It catalyses the reaction a 1,2-diacyl-sn-glycero-3-phospho-(1D-myo-inositol 4-phosphate) + ATP = a 1,2-diacyl-sn-glycero-3-phospho-(1D-myo-inositol-3,4-bisphosphate) + ADP + H(+). The catalysed reaction is L-seryl-[protein] + ATP = O-phospho-L-seryl-[protein] + ADP + H(+). Its pathway is phospholipid metabolism; phosphatidylinositol phosphate biosynthesis. Activated by both the alpha and the beta-gamma G proteins following stimulation of G protein-coupled receptors (GPCRs). Activation by GPCRs is assisted by the regulatory subunits (PIK3R5 or PIK3R6) leading to the translocation from the cytosol to the plasma membrane and to kinase activation. Inhibited by AS-604850 and AS-605240. Functionally, phosphoinositide-3-kinase (PI3K) that phosphorylates PtdIns(4,5)P2 (Phosphatidylinositol 4,5-bisphosphate) to generate phosphatidylinositol 3,4,5-trisphosphate (PIP3). PIP3 plays a key role by recruiting PH domain-containing proteins to the membrane, including AKT1 and PDPK1, activating signaling cascades involved in cell growth, survival, proliferation, motility and morphology. Links G-protein coupled receptor activation to PIP3 production. Involved in immune, inflammatory and allergic responses. Modulates leukocyte chemotaxis to inflammatory sites and in response to chemoattractant agents. May control leukocyte polarization and migration by regulating the spatial accumulation of PIP3 and by regulating the organization of F-actin formation and integrin-based adhesion at the leading edge. Controls motility of dendritic cells. Together with PIK3CD is involved in natural killer (NK) cell development and migration towards the sites of inflammation. Participates in T-lymphocyte migration. Regulates T-lymphocyte proliferation, activation, and cytokine production. Together with PIK3CD participates in T-lymphocyte development. Required for B-lymphocyte development and signaling. Together with PIK3CD participates in neutrophil respiratory burst. Together with PIK3CD is involved in neutrophil chemotaxis and extravasation. Together with PIK3CB promotes platelet aggregation and thrombosis. Regulates alpha-IIb/beta-3 integrins (ITGA2B/ ITGB3) adhesive function in platelets downstream of P2Y12 through a lipid kinase activity-independent mechanism. May have also a lipid kinase activity-dependent function in platelet aggregation. Involved in endothelial progenitor cell migration. Negative regulator of cardiac contractility. Modulates cardiac contractility by anchoring protein kinase A (PKA) and PDE3B activation, reducing cAMP levels. Regulates cardiac contractility also by promoting beta-adrenergic receptor internalization by binding to GRK2 and by non-muscle tropomyosin phosphorylation. Also has serine/threonine protein kinase activity: both lipid and protein kinase activities are required for beta-adrenergic receptor endocytosis. May also have a scaffolding role in modulating cardiac contractility. Contributes to cardiac hypertrophy under pathological stress. Through simultaneous binding of PDE3B to RAPGEF3 and PIK3R6 is assembled in a signaling complex in which the PI3K gamma complex is activated by RAPGEF3 and which is involved in angiogenesis. In neutrophils, participates in a phospholipase C-activating N-formyl peptide-activated GPCR (G protein-coupled receptor) signaling pathway downstream of RASGRP4-mediated Ras-activation, to promote neutrophil functional responses. The polypeptide is Phosphatidylinositol 4,5-bisphosphate 3-kinase catalytic subunit gamma isoform (PIK3CG) (Homo sapiens (Human)).